Consider the following 395-residue polypeptide: Elongation factor Tu (395 aa).

Residues 10–204 form the tr-type G domain; it reads KPHVNIGTIG…EVDAYIPTPE (195 aa). The interval 19-26 is G1; the sequence is GHVDHGKT. Position 19–26 (19–26) interacts with GTP; sequence GHVDHGKT. T26 lines the Mg(2+) pocket. The G2 stretch occupies residues 60-64; sequence GITIS. The G3 stretch occupies residues 81 to 84; it reads DCPG. GTP contacts are provided by residues 81-85 and 136-139; these read DCPGH and NKCD. Residues 136 to 139 form a G4 region; it reads NKCD. The interval 174–176 is G5; the sequence is SAL.

This sequence belongs to the TRAFAC class translation factor GTPase superfamily. Classic translation factor GTPase family. EF-Tu/EF-1A subfamily. Monomer.

It is found in the cytoplasm. It catalyses the reaction GTP + H2O = GDP + phosphate + H(+). Functionally, GTP hydrolase that promotes the GTP-dependent binding of aminoacyl-tRNA to the A-site of ribosomes during protein biosynthesis. The polypeptide is Elongation factor Tu (Bacillus cereus (strain G9842)).